A 715-amino-acid polypeptide reads, in one-letter code: Polyphosphate kinase (715 aa).

Asparagine 60 is a binding site for ATP. Mg(2+) contacts are provided by arginine 380 and arginine 410. Histidine 440 serves as the catalytic Phosphohistidine intermediate. Positions 473, 569, and 597 each coordinate ATP.

This sequence belongs to the polyphosphate kinase 1 (PPK1) family. Mg(2+) serves as cofactor. In terms of processing, an intermediate of this reaction is the autophosphorylated ppk in which a phosphate is covalently linked to a histidine residue through a N-P bond.

The enzyme catalyses [phosphate](n) + ATP = [phosphate](n+1) + ADP. In terms of biological role, catalyzes the reversible transfer of the terminal phosphate of ATP to form a long-chain polyphosphate (polyP). The sequence is that of Polyphosphate kinase from Erythrobacter litoralis (strain HTCC2594).